The chain runs to 1221 residues: DNA-directed RNA polymerase subunit beta' (1221 aa).

4 residues coordinate Zn(2+): C60, C62, C75, and C78. 3 residues coordinate Mg(2+): D449, D451, and D453. Residues C821, C896, C903, and C906 each coordinate Zn(2+).

This sequence belongs to the RNA polymerase beta' chain family. As to quaternary structure, the RNAP catalytic core consists of 2 alpha, 1 beta, 1 beta' and 1 omega subunit. When a sigma factor is associated with the core the holoenzyme is formed, which can initiate transcription. Mg(2+) is required as a cofactor. Zn(2+) serves as cofactor.

It catalyses the reaction RNA(n) + a ribonucleoside 5'-triphosphate = RNA(n+1) + diphosphate. DNA-dependent RNA polymerase catalyzes the transcription of DNA into RNA using the four ribonucleoside triphosphates as substrates. In Lactobacillus delbrueckii subsp. bulgaricus (strain ATCC 11842 / DSM 20081 / BCRC 10696 / JCM 1002 / NBRC 13953 / NCIMB 11778 / NCTC 12712 / WDCM 00102 / Lb 14), this protein is DNA-directed RNA polymerase subunit beta'.